The following is a 66-amino-acid chain: Conotoxin Cl14.1b (66 aa).

A signal peptide spans M1–G19. Positions F20 to Y47 are excised as a propeptide.

The protein belongs to the conotoxin L superfamily. In terms of processing, contains 2 disulfide bonds. As to expression, expressed by the venom duct.

It localises to the secreted. The sequence is that of Conotoxin Cl14.1b from Californiconus californicus (California cone).